A 539-amino-acid chain; its full sequence is RING finger protein 37 (539 aa).

The disordered stretch occupies residues 226-249 (PALPMESDCDPGGQSESQHSPCTL). A compositionally biased stretch (polar residues) spans 239 to 249 (QSESQHSPCTL). Positions 258–338 (DVPEEFLDPI…DRFLLQHSIS (81 aa)) constitute a U-box domain. Disordered regions lie at residues 359–399 (LPSR…EPTA) and 456–479 (GTRG…VSGP). Residues 374-395 (HYSLGMSASSSATSPLFSPTTS) show a composition bias toward low complexity. Residues 481–526 (CASCKQAFSSYSTNEPVYQLPCGHLLCRPCLSEKQRSQPMMCTACR) form an RING-type zinc finger.

In terms of assembly, interacts with UBE2L3. Interacts with VCP. In terms of tissue distribution, expressed in testis and placenta.

It localises to the nucleus. It catalyses the reaction S-ubiquitinyl-[E2 ubiquitin-conjugating enzyme]-L-cysteine + [acceptor protein]-L-lysine = [E2 ubiquitin-conjugating enzyme]-L-cysteine + N(6)-ubiquitinyl-[acceptor protein]-L-lysine.. It functions in the pathway protein modification; protein ubiquitination. In terms of biological role, may have a ubiquitin-protein ligase activity acting as an E3 ubiquitin-protein ligase or as a ubiquitin-ubiquitin ligase promoting elongation of ubiquitin chains on substrates. The polypeptide is RING finger protein 37 (Ubox5) (Mus musculus (Mouse)).